Consider the following 393-residue polypeptide: NAD(P)H-quinone oxidoreductase subunit H, chloroplastic (393 aa).

It belongs to the complex I 49 kDa subunit family. In terms of assembly, NDH is composed of at least 16 different subunits, 5 of which are encoded in the nucleus.

It localises to the plastid. It is found in the chloroplast thylakoid membrane. The enzyme catalyses a plastoquinone + NADH + (n+1) H(+)(in) = a plastoquinol + NAD(+) + n H(+)(out). It carries out the reaction a plastoquinone + NADPH + (n+1) H(+)(in) = a plastoquinol + NADP(+) + n H(+)(out). Its function is as follows. NDH shuttles electrons from NAD(P)H:plastoquinone, via FMN and iron-sulfur (Fe-S) centers, to quinones in the photosynthetic chain and possibly in a chloroplast respiratory chain. The immediate electron acceptor for the enzyme in this species is believed to be plastoquinone. Couples the redox reaction to proton translocation, and thus conserves the redox energy in a proton gradient. This Drimys granadensis protein is NAD(P)H-quinone oxidoreductase subunit H, chloroplastic.